The following is a 293-amino-acid chain: Inner membrane ABC transporter permease protein YcjO (293 aa).

Residues 1-12 (MNRLFSGRSDMP) are Periplasmic-facing. A helical transmembrane segment spans residues 13–33 (FALLLLAPSLLLLGGLVAWPM). Topologically, residues 34-77 (VSNIEISFLRLPLNPNIESTFVGVSNYVRILSDPGFWHSLWMTV) are cytoplasmic. The 211-residue stretch at 73–283 (LWMTVWYTAL…IIIFAVILLT (211 aa)) folds into the ABC transmembrane type-1 domain. The helical transmembrane segment at 78 to 98 (WYTALVVAGSTVLGLAVAMFF) threads the bilayer. Residues 99 to 110 (NREFRLRKTARS) lie on the Periplasmic side of the membrane. A helical transmembrane segment spans residues 111–131 (LVILSYVTPSISLVFAWKYMF). Residues 132-135 (NNGY) are Cytoplasmic-facing. A helical transmembrane segment spans residues 136–156 (GIVNYLGVDLLHLYEQAPLWF). Residues 157–162 (DNPGSS) lie on the Periplasmic side of the membrane. The helical transmembrane segment at 163–183 (FVLVVLFAIWRYFPYAFISFL) threads the bilayer. The Cytoplasmic portion of the chain corresponds to 184 to 214 (AILQTIDKSLYEAAEMDGANAWQRFRIVTLP). A helical membrane pass occupies residues 215–235 (AIMPVLATVVTLRTIWMFYMF). Over 236–261 (ADVYLLTTKVDILGVYLYKTAFAFND) the chain is Periplasmic. A helical membrane pass occupies residues 262-282 (LGKAAAISVVLFIIIFAVILL). At 283-293 (TRKRVNLNGNK) the chain is on the cytoplasmic side.

This sequence belongs to the binding-protein-dependent transport system permease family. MalFG subfamily.

It is found in the cell inner membrane. In terms of biological role, probably part of the binding-protein-dependent transport system YcjNOP. Probably responsible for the translocation of the substrate across the membrane. This Escherichia coli (strain K12) protein is Inner membrane ABC transporter permease protein YcjO (ycjO).